A 193-amino-acid polypeptide reads, in one-letter code: Imidazoleglycerol-phosphate dehydratase (193 aa).

Belongs to the imidazoleglycerol-phosphate dehydratase family.

It is found in the cytoplasm. The catalysed reaction is D-erythro-1-(imidazol-4-yl)glycerol 3-phosphate = 3-(imidazol-4-yl)-2-oxopropyl phosphate + H2O. It functions in the pathway amino-acid biosynthesis; L-histidine biosynthesis; L-histidine from 5-phospho-alpha-D-ribose 1-diphosphate: step 6/9. In Saccharolobus islandicus (strain M.16.27) (Sulfolobus islandicus), this protein is Imidazoleglycerol-phosphate dehydratase.